We begin with the raw amino-acid sequence, 140 residues long: uncharacterized protein (140 aa).

4 helical membrane passes run 4 to 24 (LLLAGWIFFILLSVCTESFSG), 56 to 76 (EAFIQKIGHAFSFFVLTYLLW), 84 to 104 (SAAAGSFAFAFFTEVLQLFFS), and 109 to 129 (IRDVLIDAVGIGLFYGLYVLA).

The protein resides in the cell membrane. In terms of biological role, may be important for peptidoglycan remodeling. This is an uncharacterized protein from Bacillus subtilis (strain 168).